The following is a 341-amino-acid chain: Abnormal cell lineage protein 44 (341 aa).

A signal peptide spans 1 to 21 (MRALYFRTTTLSTFFILCSLA). Disulfide bonds link Cys-84–Cys-95, Cys-134–Cys-142, Cys-144–Cys-158, Cys-206–Cys-220, Cys-208–Cys-215, Cys-265–Cys-292, Cys-275–Cys-287, Cys-291–Cys-331, Cys-307–Cys-322, Cys-309–Cys-319, and Cys-314–Cys-315. The O-palmitoleoyl serine; by mom-1 moiety is linked to residue Ser-212. Residue Asn-279 is glycosylated (N-linked (GlcNAc...) asparagine).

This sequence belongs to the Wnt family. In terms of processing, palmitoleoylation is required for efficient binding to frizzled receptors. Depalmitoleoylation leads to Wnt signaling pathway inhibition.

Its subcellular location is the secreted. It is found in the extracellular space. The protein localises to the extracellular matrix. Functionally, ligand for members of the frizzled family of seven transmembrane receptors. Affects male tail development, vulval precursor cell specification and egg laying. Involved in morphogenesis by influencing polarity of asymmetric cell divisions of the B, U, and F cells in the male, and the T cell in males and hermaphrodites. Controls spindle orientation in B-gamma cell division during male copulatory spicule development. Involved in specification of the P7.p lineage during vulval development. Has a role in providing polarity and default lin-17 localization in axon development and positioning of neuromuscular synapses in DA9 regions by negatively regulating synaptogenesis. The polypeptide is Abnormal cell lineage protein 44 (Caenorhabditis briggsae).